A 311-amino-acid chain; its full sequence is Biotin synthase (311 aa).

The Radical SAM core domain occupies 32–258 (NGVQFCQLLN…LFPLSRIRLA (227 aa)). The [4Fe-4S] cluster site is built by Cys47, Cys51, and Cys54. [2Fe-2S] cluster contacts are provided by Cys91, Cys124, Cys184, and Arg256.

This sequence belongs to the radical SAM superfamily. Biotin synthase family. As to quaternary structure, homodimer. It depends on [4Fe-4S] cluster as a cofactor. Requires [2Fe-2S] cluster as cofactor.

It catalyses the reaction (4R,5S)-dethiobiotin + (sulfur carrier)-SH + 2 reduced [2Fe-2S]-[ferredoxin] + 2 S-adenosyl-L-methionine = (sulfur carrier)-H + biotin + 2 5'-deoxyadenosine + 2 L-methionine + 2 oxidized [2Fe-2S]-[ferredoxin]. It participates in cofactor biosynthesis; biotin biosynthesis; biotin from 7,8-diaminononanoate: step 2/2. Its function is as follows. Catalyzes the conversion of dethiobiotin (DTB) to biotin by the insertion of a sulfur atom into dethiobiotin via a radical-based mechanism. This is Biotin synthase from Methylacidiphilum infernorum (isolate V4) (Methylokorus infernorum (strain V4)).